The following is a 238-amino-acid chain: Protein E6 (238 aa).

The segment covering 40-51 (KETTTREQKHET) has biased composition (basic and acidic residues). Disordered stretches follow at residues 40–64 (KETT…EEQE) and 210–238 (EFNE…EFEP). Over residues 227–238 (EEFEESEEEFEP) the composition is skewed to acidic residues.

It is predominantly expressed in fiber cells.

It localises to the secreted. It is found in the cell wall. The polypeptide is Protein E6 (E6) (Gossypium hirsutum (Upland cotton)).